We begin with the raw amino-acid sequence, 140 residues long: Ribosomal RNA large subunit methyltransferase H (140 aa).

S-adenosyl-L-methionine is bound by residues Leu-58, Gly-90, and Leu-108–Phe-113.

It belongs to the RNA methyltransferase RlmH family. In terms of assembly, homodimer.

The protein localises to the cytoplasm. It catalyses the reaction pseudouridine(1915) in 23S rRNA + S-adenosyl-L-methionine = N(3)-methylpseudouridine(1915) in 23S rRNA + S-adenosyl-L-homocysteine + H(+). In terms of biological role, specifically methylates the pseudouridine at position 1915 (m3Psi1915) in 23S rRNA. The polypeptide is Ribosomal RNA large subunit methyltransferase H (Protochlamydia amoebophila (strain UWE25)).